The chain runs to 409 residues: DNA polymerase IV 2 (409 aa).

The UmuC domain maps to 5-190 (IFMVDMESFF…LPIECLYGVG (186 aa)). Mg(2+) is bound by residues Asp9 and Asp105. The active site involves Glu106.

This sequence belongs to the DNA polymerase type-Y family. In terms of assembly, monomer. The cofactor is Mg(2+).

The protein localises to the cytoplasm. The catalysed reaction is DNA(n) + a 2'-deoxyribonucleoside 5'-triphosphate = DNA(n+1) + diphosphate. Poorly processive, error-prone DNA polymerase involved in untargeted mutagenesis. Copies undamaged DNA at stalled replication forks, which arise in vivo from mismatched or misaligned primer ends. These misaligned primers can be extended by PolIV. Exhibits no 3'-5' exonuclease (proofreading) activity. May be involved in translesional synthesis, in conjunction with the beta clamp from PolIII. The sequence is that of DNA polymerase IV 2 (dinB2) from Halalkalibacterium halodurans (strain ATCC BAA-125 / DSM 18197 / FERM 7344 / JCM 9153 / C-125) (Bacillus halodurans).